A 173-amino-acid chain; its full sequence is Succinate dehydrogenase assembly factor 3, mitochondrial (173 aa).

The transit peptide at 1 to 59 (MFRPSTSLALRSTLRQLASASNQPIPPGSEINAVKRTVATILPPIRLYRRIIRAHRRLD) directs the protein to the mitochondrion. The interval 149–173 (FPPEKQRELAEKAAADAGLSVKKDE) is disordered. Residues 152–162 (EKQRELAEKAA) show a composition bias toward basic and acidic residues.

It belongs to the complex I LYR family. SDHAF3 subfamily. Interacts with the iron-sulfur protein subunit within the SDH catalytic dimer.

Its subcellular location is the mitochondrion matrix. Its function is as follows. Plays an essential role in the assembly of succinate dehydrogenase (SDH), an enzyme complex (also referred to as respiratory complex II) that is a component of both the tricarboxylic acid (TCA) cycle and the mitochondrial electron transport chain, and which couples the oxidation of succinate to fumarate with the reduction of ubiquinone (coenzyme Q) to ubiquinol. Promotes maturation of the iron-sulfur protein subunit of the SDH catalytic dimer, protecting it from the deleterious effects of oxidants. May act together with SDHAF1. This Mycosarcoma maydis (Corn smut fungus) protein is Succinate dehydrogenase assembly factor 3, mitochondrial.